Consider the following 117-residue polypeptide: Large ribosomal subunit protein uL22 (117 aa).

The protein belongs to the universal ribosomal protein uL22 family. Part of the 50S ribosomal subunit.

This protein binds specifically to 23S rRNA; its binding is stimulated by other ribosomal proteins, e.g. L4, L17, and L20. It is important during the early stages of 50S assembly. It makes multiple contacts with different domains of the 23S rRNA in the assembled 50S subunit and ribosome. Functionally, the globular domain of the protein is located near the polypeptide exit tunnel on the outside of the subunit, while an extended beta-hairpin is found that lines the wall of the exit tunnel in the center of the 70S ribosome. The chain is Large ribosomal subunit protein uL22 from Leptospira biflexa serovar Patoc (strain Patoc 1 / ATCC 23582 / Paris).